Reading from the N-terminus, the 156-residue chain is Cell division protein SepF (156 aa).

This sequence belongs to the SepF family. Homodimer. Interacts with FtsZ.

It localises to the cytoplasm. Cell division protein that is part of the divisome complex and is recruited early to the Z-ring. Probably stimulates Z-ring formation, perhaps through the cross-linking of FtsZ protofilaments. Its function overlaps with FtsA. The chain is Cell division protein SepF from Bacillus cytotoxicus (strain DSM 22905 / CIP 110041 / 391-98 / NVH 391-98).